Consider the following 171-residue polypeptide: Co-chaperone protein HscB homolog (171 aa).

A J domain is found at 2–74 (NHFELFGLPN…VTRAEYILSE (73 aa)).

The protein belongs to the HscB family. In terms of assembly, interacts with HscA and stimulates its ATPase activity.

Its function is as follows. Co-chaperone involved in the maturation of iron-sulfur cluster-containing proteins. Seems to help targeting proteins to be folded toward HscA. The polypeptide is Co-chaperone protein HscB homolog (Aliivibrio salmonicida (strain LFI1238) (Vibrio salmonicida (strain LFI1238))).